A 357-amino-acid polypeptide reads, in one-letter code: Probable 3'(2'),5'-bisphosphate nucleotidase 3 (357 aa).

The active-site Proton acceptor is aspartate 46. The Mg(2+) site is built by glutamate 71, aspartate 135, and isoleucine 137. Threonine 140 functions as the Proton acceptor in the catalytic mechanism. Threonine 140, serine 256, lysine 259, and arginine 273 together coordinate adenosine 3',5'-bisphosphate. The AMP site is built by serine 256, lysine 259, and arginine 273.

The protein belongs to the inositol monophosphatase superfamily. The cofactor is Mg(2+).

It catalyses the reaction 3'-phosphoadenylyl sulfate + H2O = adenosine 5'-phosphosulfate + phosphate. The enzyme catalyses adenosine 3',5'-bisphosphate + H2O = AMP + phosphate. The catalysed reaction is adenosine 2',5'-bisphosphate + H2O = AMP + phosphate. It carries out the reaction 1D-myo-inositol 1,4-bisphosphate + H2O = 1D-myo-inositol 4-phosphate + phosphate. It catalyses the reaction 1D-myo-inositol 1,3,4-trisphosphate + H2O = 1D-myo-inositol 3,4-bisphosphate + phosphate. It functions in the pathway signal transduction; phosphatidylinositol signaling pathway. Functionally, phosphatase that converts adenosine 3'-phosphate 5'-phosphosulfate (PAPS) to adenosine 5'-phosphosulfate (APS) and 3'(2')-phosphoadenosine 5'-phosphate (PAP) to AMP. Is also able to hydrolyze inositol 1,4-bisphosphate and inositol 1,3,4-trisphosphate. This Arabidopsis thaliana (Mouse-ear cress) protein is Probable 3'(2'),5'-bisphosphate nucleotidase 3 (SAL3).